The chain runs to 398 residues: uncharacterized protein (398 aa).

Belongs to the class-V pyridoxal-phosphate-dependent aminotransferase family. As to quaternary structure, homodimer.

Is essential for optimal growth. This is an uncharacterized protein from Mycobacterium tuberculosis (strain CDC 1551 / Oshkosh).